The chain runs to 325 residues: Beta-ketoacyl-[acyl-carrier-protein] synthase III (325 aa).

Active-site residues include Cys116 and His252. Residues 253–257 (QANLR) are ACP-binding. Asn282 is an active-site residue.

It belongs to the thiolase-like superfamily. FabH family. In terms of assembly, homodimer.

The protein resides in the cytoplasm. The enzyme catalyses butanoyl-CoA + malonyl-[ACP] + H(+) = 3-oxohexanoyl-[ACP] + CO2 + CoA. The catalysed reaction is hexanoyl-CoA + malonyl-[ACP] + H(+) = 3-oxooctanoyl-[ACP] + CO2 + CoA. It catalyses the reaction octanoyl-CoA + malonyl-[ACP] + H(+) = 3-oxodecanoyl-[ACP] + CO2 + CoA. It carries out the reaction decanoyl-CoA + malonyl-[ACP] + H(+) = 3-oxododecanoyl-[ACP] + CO2 + CoA. The enzyme catalyses 2-methylpropanoyl-CoA + malonyl-[ACP] + H(+) = 4-methyl-3-oxopentanoyl-[ACP] + CO2 + CoA. The catalysed reaction is 3-methylbutanoyl-CoA + malonyl-[ACP] + H(+) = 5-methyl-3-oxohexanoyl-[ACP] + CO2 + CoA. It catalyses the reaction malonyl-[ACP] + acetyl-CoA + H(+) = 3-oxobutanoyl-[ACP] + CO2 + CoA. Its pathway is lipid metabolism; fatty acid biosynthesis. Catalyzes the condensation reaction of fatty acid synthesis by the addition to an acyl acceptor of two carbons from malonyl-ACP. Catalyzes the first condensation reaction which initiates fatty acid synthesis and may therefore play a role in governing the total rate of fatty acid production. Possesses both acetoacetyl-ACP synthase and acetyl transacylase activities. Can use a wide range of acyl-CoAs as the primer substrate in vitro, with a slight preference for short, medium-straight chain acyl-CoAs. Can also use branched-chain acyl-CoAs and acetyl-CoA. This chain is Beta-ketoacyl-[acyl-carrier-protein] synthase III, found in Xanthomonas campestris pv. campestris (strain 8004).